Here is a 428-residue protein sequence, read N- to C-terminus: MSAIVDIFAREILDSRGNPTVECDVLLESGVMGRAAVPSGASTGQKEALELRDGDKSRYSGKGVLKAVEHVNNQIAQALIGIDASEQSYIDQIMIELDGTENKGNLGANATLAVSMAVARAAAEDAGLPLYRYLGGAGPMSLPVPMMNVINGGEHANNSLNIQEFMIMPVGAKSFREALRCGAEIFHALKKLCDSKGFPTTVGDEGGFAPNLNSHKEALQLMVEATEAAGYKAGEDVLFALDCASSEFYKDGKYHLEAEGRSYTNAEFAEYLESLVNEFPIISIEDGMDENDWEGWKLLTEKLGGKVQLVGDDLFVTNPKILAEGIEKGVANALLVKVNQIGTLSETLKAVDLAKRNRYASVMSHRSGETEDSTIADLAVATNCMQIKTGSLSRSDRMAKYNQLLRIEEELAEAADYPGKAAFYQLGK.

Glutamine 163 serves as a coordination point for (2R)-2-phosphoglycerate. Glutamate 205 acts as the Proton donor in catalysis. Mg(2+) is bound by residues aspartate 242, glutamate 285, and aspartate 312. The (2R)-2-phosphoglycerate site is built by lysine 337, arginine 366, serine 367, and lysine 388. The active-site Proton acceptor is the lysine 337.

It belongs to the enolase family. Requires Mg(2+) as cofactor.

It localises to the cytoplasm. The protein resides in the secreted. The protein localises to the cell surface. It carries out the reaction (2R)-2-phosphoglycerate = phosphoenolpyruvate + H2O. It functions in the pathway carbohydrate degradation; glycolysis; pyruvate from D-glyceraldehyde 3-phosphate: step 4/5. Catalyzes the reversible conversion of 2-phosphoglycerate (2-PG) into phosphoenolpyruvate (PEP). It is essential for the degradation of carbohydrates via glycolysis. This chain is Enolase, found in Neisseria meningitidis serogroup C / serotype 2a (strain ATCC 700532 / DSM 15464 / FAM18).